The chain runs to 603 residues: MSFVIAAPETLVRAASDLANIGSTLGAANAAALGPTTELLAAGADEVSAAIASLFAAHGQAYQAVSAQMSAFHAQFVQTFTAGAGAYASAEAAAAAPLEGLLNIVNTPTQLLLGRPLIGNGANGAPGTGQAVGADGLLYGNGGAGGSGAPGQAGGPGGAAGLFGNGGAGGAGGDGPGNGAAGGAGGAGGLLFGSGGAGGPGGVGNTGTGGLGGDGGAAGLFGAGGIGGAGGPGFNGGAGGAGGRSGLFEVLAAGGAGGTGGLSVNGGTGGTGGTGGGGGLFSNGGAGGAGGFGVSGSAGGNGGTGGDGGIFTGNGGTGGTGGTGTGNQLVGGEGGADGAGGNAGILFGAGGIGGTGGTGLGAPDPGGTGGKGGVGGIGGAGALFGPGGAGGTGGFGASSADQMAGGIGGSGGSGGAAKLIGDGGAGGTGGDSVRGAAGSGGTGGTGGLIGDGGAGGAGGTGIEFGSVGGAGGAGGNAAGLSGAGGAGGAGGFGETAGDGGAGGNAGLFNGDGGAGGAGGLGIAGDGGNGGKGGKAGMVGNGGDGGAGGASVVANGGVGGSGGNATLIGNGGNGGNGGVGSAPGKGGAGGTAGLLGLNGSPGLS.

The 93-residue stretch at 1–93 folds into the PE domain; it reads MSFVIAAPET…AGAYASAEAA (93 aa). The disordered stretch occupies residues 309 to 333; it reads GIFTGNGGTGGTGGTGTGNQLVGGE.

The protein belongs to the mycobacterial PE family. PGRS subfamily.

This is an uncharacterized protein from Mycobacterium tuberculosis (strain CDC 1551 / Oshkosh).